A 985-amino-acid chain; its full sequence is MVFQPISEFLLIRNAGMSMYFNKIISFNIISRIVICIFLICGMFMAGASEKYDANAPQQVQPYSVSSSAFENLHPNNEMESSINPFSASDTERNAAIIDRANKEQETEAVNKMISTGARLAASGRASDVAHSMVGDAVNQEIKQWLNRFGTAQVNLNFDKNFSLKESSLDWLAPWYDSASFLFFSQLGIRNKDSRNTLNLGVGIRTLENGWLYGLNTFYDNDLTGHNHRIGLGAEAWTDYLQLAANGYFRLNGWHSSRDFSDYKERPATGGDLRANAYLPALPQLGGKLMYEQYTGERVALFGKDNLQRNPYAVTAGINYTPVPLLTVGVDQRMGKSSKHETQWNLQMNYRLGESFQSQLSPSAVAGTRLLAESRYNLVDRNNNIVLEYQKQQVVKLTLSPATISGLPGQVYQVNAQVQGASAVREIVWSDAELIAAGGTLTPLSTTQFNLVLPPYKRTAQVSRVTDDLTANFYSLSALAVDHQGNRSNSFTLSVTVQQPQLTLTAAVIGDGAPANGKTAITVEFTVADFEGKPLAGQEVVITTNNGALPNKITEKTDANGVARIALTNTTDGVTVVTAEVEGQRQSVDTHFVKGTIAADKSTLAAVPTSIIADGLMASTITLELKDTYGDPQAGANVAFDTTLGNMGVITDHNDGTYSAPLTSTTLGVATVTVKVDGAAFSVPSVTVNFTADPIPDAGRSSFTVSTPDILADGTMSSTLSFVPVDKNGHFISGMQGLSFTQNGVPVSISPITEQPDSYTATVVGNTAGDVTITPQVDTLILSTLQKKISLFPVPTLTGILVNGQNFATDKGFPKTIFKNATFQLQMDNDVANNTQYEWSSSFTPNVSVNDQGQVTITYQTYSEVAVTAKSKKFPSYSVSYRFYPNRWIYDGGTSLVSSLEASRQCQGSDMSAVLESSRATNGTRAPDGTLWGEWGSLTAYSSDWQSGEYWVKKTSTDFETMNMDTGALVQGPAYLAFPLCALAI.

Positions 494–594 (SVTVQQPQLT…RQSVDTHFVK (101 aa)) are D1. The Extracellular segment spans residues 494 to 985 (SVTVQQPQLT…LAFPLCALAI (492 aa)). 2 Big-1 domains span residues 503-594 (TLTA…HFVK) and 601-691 (KSTL…VNFT). Residues 595 to 694 (GTIAADKSTL…SVTVNFTADP (100 aa)) form a D2 region. Residues 695–794 (IPDAGRSSFT…LQKKISLFPV (100 aa)) are D3. The interval 795-886 (PTLTGILVNG…YSVSYRFYPN (92 aa)) is D4. An integrin-binding region spans residues 795 to 985 (PTLTGILVNG…LAFPLCALAI (191 aa)). The interval 887 to 985 (RWIYDGGTSL…LAFPLCALAI (99 aa)) is D5. An intrachain disulfide couples C906 to C981.

The protein belongs to the intimin/invasin family.

Its subcellular location is the cell surface. Its function is as follows. Invasin is a protein that allows enteric bacteria to penetrate cultured mammalian cells. The entry of invasin in the cell is mediated by binding several beta-1 chain integrins. The polypeptide is Invasin (Yersinia pseudotuberculosis serotype I (strain IP32953)).